Consider the following 209-residue polypeptide: Regulator of G-protein signaling 1 (209 aa).

An RGS domain is found at 85 to 200 (SLEKLLANQT…LKSDIYLNLL (116 aa)).

As to quaternary structure, interacts with GNAI1 and GNAQ. As to expression, detected in peripheral blood monocytes. Expression is relatively low in B-cells and chronic lymphocytic leukemia B-cells; however, in other types of malignant B-cell such as non-Hodgkin lymphoma and hairy cell leukemia, expression is constitutively high.

The protein localises to the cell membrane. It is found in the cytoplasm. It localises to the cytosol. In terms of biological role, regulates G protein-coupled receptor signaling cascades, including signaling downstream of the N-formylpeptide chemoattractant receptors and leukotriene receptors. Inhibits B cell chemotaxis toward CXCL12. Inhibits signal transduction by increasing the GTPase activity of G protein alpha subunits thereby driving them into their inactive GDP-bound form. This chain is Regulator of G-protein signaling 1 (RGS1), found in Homo sapiens (Human).